The primary structure comprises 401 residues: Probable acid ceramidase (401 aa).

Positions 1–22 (MKPVAISLSLLLLVTLLPGSEQ) are cleaved as a signal peptide. Asn101, Asn303, and Asn371 each carry an N-linked (GlcNAc...) asparagine glycan.

The protein belongs to the acid ceramidase family.

The catalysed reaction is an N-acyl-sphingoid base + H2O = a sphingoid base + a fatty acid. It catalyses the reaction an N-acylsphing-4-enine + H2O = sphing-4-enine + a fatty acid. The enzyme catalyses an N-acyl-15-methylhexadecasphing-4-enine + H2O = 15-methylhexadecasphing-4-enine + a fatty acid. Catalyzes the hydrolysis of ceramides into sphingoid base and free fatty acid. C.elegans contain specific sphingoid bases, which are unique or different in structure compared to the sphingoid bases found in other animals. Two examples of these distinctive compounds are: 15-methylhexadecasphinganine and 15-methylhexadecasphing-4-enine. The chain is Probable acid ceramidase from Caenorhabditis elegans.